A 534-amino-acid polypeptide reads, in one-letter code: N-acetylglutamate synthase, mitochondrial (534 aa).

A mitochondrion-targeting transit peptide spans Met-1 to Arg-18. Residues Leu-19–Arg-99 are disordered. Residues Leu-19 to Arg-376 are amino-acid kinase domain (AAK). Residues Val-81–Pro-96 are compositionally biased toward pro residues. Positions Glu-375–His-526 constitute an N-acetyltransferase domain. Residues Lys-401, Lys-444, and Arg-474–Asn-479 each bind substrate.

This sequence belongs to the acetyltransferase family. In terms of assembly, homodimer. Homotetramer. Probably processed by mitochondrial processing peptidase (MPP). The long form has not yet been isolated. Highly expressed in the adult liver, kidney and small intestine. Weakly expressed in the fetal liver, lung, pancreas, placenta, heart and brain tissue.

The protein resides in the mitochondrion matrix. The catalysed reaction is L-glutamate + acetyl-CoA = N-acetyl-L-glutamate + CoA + H(+). It participates in amino-acid biosynthesis; L-arginine biosynthesis; N(2)-acetyl-L-ornithine from L-glutamate: step 1/4. With respect to regulation, increased by L-arginine. Plays a role in the regulation of ureagenesis by producing the essential cofactor N-acetylglutamate (NAG), thus modulating carbamoylphosphate synthase I (CPS1) activity. This chain is N-acetylglutamate synthase, mitochondrial (NAGS), found in Homo sapiens (Human).